The sequence spans 346 residues: Galactitol 1-phosphate 5-dehydrogenase (346 aa).

Zn(2+) is bound by residues cysteine 38, histidine 59, cysteine 89, cysteine 92, cysteine 95, cysteine 103, and glutamate 144.

It belongs to the zinc-containing alcohol dehydrogenase family. The cofactor is Zn(2+).

It carries out the reaction galactitol 1-phosphate + NAD(+) = keto-D-tagatose 6-phosphate + NADH + H(+). Functionally, converts galactitol 1-phosphate to tagatose 6-phosphate. The protein is Galactitol 1-phosphate 5-dehydrogenase (gatD) of Escherichia coli O157:H7.